Consider the following 124-residue polypeptide: Large ribosomal subunit protein bL21 (124 aa).

The protein belongs to the bacterial ribosomal protein bL21 family. As to quaternary structure, part of the 50S ribosomal subunit. Contacts protein L20.

This protein binds to 23S rRNA in the presence of protein L20. In Synechocystis sp. (strain ATCC 27184 / PCC 6803 / Kazusa), this protein is Large ribosomal subunit protein bL21.